Reading from the N-terminus, the 321-residue chain is Putative ribose-phosphate pyrophosphokinase 2 (321 aa).

Residues 43–45 (DGE) and 102–103 (RQ) contribute to the ATP site. His136 and Asp176 together coordinate Mg(2+). Asp225 contributes to the D-ribose 5-phosphate binding site.

Belongs to the ribose-phosphate pyrophosphokinase family. Class I subfamily. Homohexamer. Mg(2+) is required as a cofactor.

It is found in the cytoplasm. The catalysed reaction is D-ribose 5-phosphate + ATP = 5-phospho-alpha-D-ribose 1-diphosphate + AMP + H(+). The protein operates within metabolic intermediate biosynthesis; 5-phospho-alpha-D-ribose 1-diphosphate biosynthesis; 5-phospho-alpha-D-ribose 1-diphosphate from D-ribose 5-phosphate (route I): step 1/1. Functionally, involved in the biosynthesis of the central metabolite phospho-alpha-D-ribosyl-1-pyrophosphate (PRPP) via the transfer of pyrophosphoryl group from ATP to 1-hydroxyl of ribose-5-phosphate (Rib-5-P). The protein is Putative ribose-phosphate pyrophosphokinase 2 of Lactiplantibacillus plantarum (strain ATCC BAA-793 / NCIMB 8826 / WCFS1) (Lactobacillus plantarum).